Consider the following 256-residue polypeptide: MSFQILPIPMWVGTQDNYAYLLLCEETRQAAIVDPAEVNVVMPILKKKLKNKEIDLQAILTTHHHADHSGGNLNLKKEFPHVTIYGGSDQNGVSHVLQDKETLRIGNVQIEALHTPCHTRDSICFYAHSSNEHAVFTGDTLFNAGCGRFFEGTAAEMHIALNAVLSSLPNNTVIYPGHEYTKSNVKFASKHLQSEALNHLEGLCNHNQFIAGHITMGQEKQFNPFMRVTDPELQKHLGLNDPIKVMDELRTLKNQG.

His-63, His-65, Asp-67, His-68, His-118, and Asp-139 together coordinate Zn(2+). Substrate is bound by residues 148 to 150, 178 to 180, and 250 to 253; these read RFF, HEY, and RTLK. Position 178 (His-178) interacts with Zn(2+).

Belongs to the metallo-beta-lactamase superfamily. Glyoxalase II family. Zn(2+) is required as a cofactor.

The protein resides in the cytoplasm. Its subcellular location is the nucleus. The enzyme catalyses an S-(2-hydroxyacyl)glutathione + H2O = a 2-hydroxy carboxylate + glutathione + H(+). It catalyses the reaction (R)-S-lactoylglutathione + H2O = (R)-lactate + glutathione + H(+). It functions in the pathway secondary metabolite metabolism; methylglyoxal degradation; (R)-lactate from methylglyoxal: step 2/2. Thiolesterase that catalyzes the hydrolysis of S-D-lactoylglutathione to form glutathione and D-lactic acid. Involved in the metabolism of methylglyoxal, a toxic compound for yeast proliferation, by converting methylglyoxal to lactate via S-D-lactoylglutathione by sequential enzyme reactions catalyzed by glyoxalase I and glyoxalase II. The protein is Probable hydroxyacylglutathione hydrolase SPCC13B11.03c of Schizosaccharomyces pombe (strain 972 / ATCC 24843) (Fission yeast).